The following is a 153-amino-acid chain: Small ribosomal subunit protein bS16 (153 aa).

The disordered stretch occupies residues 114 to 153 (ENEPVGEAITPKKKKAKAEDAEAAADAPAEAAAESEAADK). The span at 137–153 (AADAPAEAAAESEAADK) shows a compositional bias: low complexity.

This sequence belongs to the bacterial ribosomal protein bS16 family.

The polypeptide is Small ribosomal subunit protein bS16 (Rhodococcus opacus (strain B4)).